We begin with the raw amino-acid sequence, 207 residues long: Ribonuclease HII (207 aa).

In terms of domain architecture, RNase H type-2 spans 20–207 (QLFAGVDEVG…KPVKRVLGIE (188 aa)). Residues Asp26, Glu27, and Asp118 each coordinate a divalent metal cation.

Belongs to the RNase HII family. Mn(2+) is required as a cofactor. Mg(2+) serves as cofactor.

Its subcellular location is the cytoplasm. The enzyme catalyses Endonucleolytic cleavage to 5'-phosphomonoester.. Its function is as follows. Endonuclease that specifically degrades the RNA of RNA-DNA hybrids. In Aliivibrio salmonicida (strain LFI1238) (Vibrio salmonicida (strain LFI1238)), this protein is Ribonuclease HII.